Consider the following 210-residue polypeptide: Uracil phosphoribosyltransferase (210 aa).

5-phospho-alpha-D-ribose 1-diphosphate is bound by residues R78, R103, and 130–138 (DPMLATGGS). Uracil-binding positions include I193 and 198 to 200 (GDA). D199 is a 5-phospho-alpha-D-ribose 1-diphosphate binding site.

Belongs to the UPRTase family. The cofactor is Mg(2+).

The catalysed reaction is UMP + diphosphate = 5-phospho-alpha-D-ribose 1-diphosphate + uracil. It functions in the pathway pyrimidine metabolism; UMP biosynthesis via salvage pathway; UMP from uracil: step 1/1. Its activity is regulated as follows. Allosterically activated by GTP. Catalyzes the conversion of uracil and 5-phospho-alpha-D-ribose 1-diphosphate (PRPP) to UMP and diphosphate. The polypeptide is Uracil phosphoribosyltransferase (Laribacter hongkongensis (strain HLHK9)).